The chain runs to 109 residues: Small ribosomal subunit protein uS10 (109 aa).

Belongs to the universal ribosomal protein uS10 family. Part of the 30S ribosomal subunit.

In terms of biological role, involved in the binding of tRNA to the ribosomes. The polypeptide is Small ribosomal subunit protein uS10 (Koribacter versatilis (strain Ellin345)).